Consider the following 510-residue polypeptide: Glycerol kinase (510 aa).

Threonine 13 lines the ADP pocket. ATP contacts are provided by threonine 13 and threonine 14. Threonine 13 is a sn-glycerol 3-phosphate binding site. Arginine 17 is a binding site for ADP. Arginine 83, glutamate 84, tyrosine 135, and aspartate 255 together coordinate sn-glycerol 3-phosphate. Residues arginine 83, glutamate 84, tyrosine 135, aspartate 255, and glutamine 256 each coordinate glycerol. Positions 277, 321, 421, and 425 each coordinate ADP. Residues threonine 277, glycine 321, and glycine 421 each coordinate ATP.

The protein belongs to the FGGY kinase family.

The catalysed reaction is glycerol + ATP = sn-glycerol 3-phosphate + ADP + H(+). Its pathway is polyol metabolism; glycerol degradation via glycerol kinase pathway; sn-glycerol 3-phosphate from glycerol: step 1/1. Key enzyme in the regulation of glycerol uptake and metabolism. Catalyzes the phosphorylation of glycerol to yield sn-glycerol 3-phosphate. This Haloarcula marismortui (strain ATCC 43049 / DSM 3752 / JCM 8966 / VKM B-1809) (Halobacterium marismortui) protein is Glycerol kinase.